The chain runs to 360 residues: Terpene synthase 5 (360 aa).

The DDxx(x)D/E motif signature appears at 87–92; sequence DDFLER. Residues 237–245 carry the NDxxSxxxD/E motif motif; it reads NDCVSYAKE.

The protein belongs to the terpene synthase family.

Its function is as follows. Terpene synthase that converts its substrate farnesyl diphosphate (FPP) into 2 yet unidentified sesquiterpenes. The polypeptide is Terpene synthase 5 (Dictyostelium purpureum (Slime mold)).